The chain runs to 307 residues: sn-1-specific diacylglycerol lipase ABHD11 (307 aa).

A mitochondrion-targeting transit peptide spans 1-34 (MLRWARAWRVPRGVLGASSPRRLAVPVTFCSSRS). Lysine 79 carries the N6-succinyllysine modification. The Charge relay system role is filled by serine 133. At lysine 196 the chain carries N6-succinyllysine. Catalysis depends on charge relay system residues aspartate 229 and histidine 288.

This sequence belongs to the AB hydrolase superfamily. As to quaternary structure, interacts with OGDH and DLST; this interaction maintains the functional lipoylation of the 2-oxoglutarate dehydrogenase complex. In terms of processing, phosphorylated. In terms of tissue distribution, expressed in white adipose tissues.

The protein localises to the mitochondrion. The protein resides in the mitochondrion matrix. The catalysed reaction is 1-octadecanoyl-2-(5Z,8Z,11Z,14Z-eicosatetraenoyl)-sn-glycerol + H2O = 2-(5Z,8Z,11Z,14Z-eicosatetraenoyl)-glycerol + octadecanoate + H(+). The enzyme catalyses a 1,2-diacyl-sn-glycerol + H2O = a 2-acylglycerol + a fatty acid + H(+). It catalyses the reaction a 1,3-diacyl-sn-glycerol + H2O = a 1-acyl-sn-glycerol + a fatty acid + H(+). It carries out the reaction 1-octadecanoyl-2-(9Z-octadecenoyl)-sn-glycerol + H2O = 2-(9Z-octadecenoyl)-glycerol + octadecanoate + H(+). The catalysed reaction is 1-octadecanoyl-2-(4Z,7Z,10Z,13Z,16Z,19Z-docosahexaenoyl)-sn-glycerol + H2O = 2-(4Z,7Z,10Z,13Z,16Z,19Z-docosahexaenoyl)-glycerol + octadecanoate + H(+). The enzyme catalyses 1,2-didecanoylglycerol + H2O = decanoylglycerol + decanoate + H(+). Functionally, catalyzes the hydrolysis of diacylglycerol in vitro and may function as a key regulator in lipid metabolism, namely by regulating the intracellular levels of diacylglycerol. 1,2-diacyl-sn-glycerols are the preferred substrate over 1,3-diacyl-sn-glycerols. The enzyme hydrolyzes stearate in preference to palmitate from the sn-1 position of 1,2-diacyl-sn-glycerols. Maintains the functional lipoylation of the 2-oxoglutarate dehydrogenase complex (OGDHc) through its interaction with the OGDHc by preventing the formation of lipoyl adducts. In addition, is also required for the expansion and differentiation of embryonic stem cells (ESCs). The protein is sn-1-specific diacylglycerol lipase ABHD11 of Mus musculus (Mouse).